Here is a 584-residue protein sequence, read N- to C-terminus: Asparagine synthetase [glutamine-hydrolyzing] 1 (584 aa).

Cysteine 2 acts as the For GATase activity in catalysis. One can recognise a Glutamine amidotransferase type-2 domain in the interval 2-185 (CGILAVLGCS…PGHFYSSKLG (184 aa)). Residues 50 to 54 (RLAVI), 75 to 77 (NGE), and aspartate 98 contribute to the L-glutamine site. Residues 193–516 (PPWFNESVPS…PQNSARLTVP (324 aa)) enclose the Asparagine synthetase domain. ATP-binding positions include leucine 231, valine 267, and 341 to 342 (SG).

The catalysed reaction is L-aspartate + L-glutamine + ATP + H2O = L-asparagine + L-glutamate + AMP + diphosphate + H(+). Its pathway is amino-acid biosynthesis; L-asparagine biosynthesis; L-asparagine from L-aspartate (L-Gln route): step 1/1. Functionally, essential for nitrogen assimilation, distribution and remobilization within the plant via the phloem. In Arabidopsis thaliana (Mouse-ear cress), this protein is Asparagine synthetase [glutamine-hydrolyzing] 1 (ASN1).